We begin with the raw amino-acid sequence, 352 residues long: MSGKRLMVMAGGTGGHVFPGLAVAHHLMAQGWQVRWLGTADRMEADLVPKHGIDIEFIRISGLRGKGIKALLAAPLRIFNAWRQARAIMKAWQPDVVLGMGGYVSGPGGLAAWSCGIPVVLHEQNGIAGLTNKWLAKIATKVMQAFPGAFPDAEVVGNPVRTDVLALPLPSVRLSGRDGPTRVLAIGGSQGARVLNQTMPQVAARLGDSISLWHQVGKGALDEVNADYTRVNQSQHRVSEFIDDMASAYAWADVVVCRSGALTVSEVAAAGLPAIFVPFQHKDRQQYWNALPLEQAGAAVIYEQPQFTADAVAATLAGWDRPTLLAMAEKARAVAIPDATERVAAEVSKAAR.

UDP-N-acetyl-alpha-D-glucosamine is bound by residues 13-15, N125, R161, S189, I242, 261-266, and Q286; these read TGG and ALTVSE.

The protein belongs to the glycosyltransferase 28 family. MurG subfamily.

It is found in the cell inner membrane. It catalyses the reaction di-trans,octa-cis-undecaprenyl diphospho-N-acetyl-alpha-D-muramoyl-L-alanyl-D-glutamyl-meso-2,6-diaminopimeloyl-D-alanyl-D-alanine + UDP-N-acetyl-alpha-D-glucosamine = di-trans,octa-cis-undecaprenyl diphospho-[N-acetyl-alpha-D-glucosaminyl-(1-&gt;4)]-N-acetyl-alpha-D-muramoyl-L-alanyl-D-glutamyl-meso-2,6-diaminopimeloyl-D-alanyl-D-alanine + UDP + H(+). The protein operates within cell wall biogenesis; peptidoglycan biosynthesis. Its function is as follows. Cell wall formation. Catalyzes the transfer of a GlcNAc subunit on undecaprenyl-pyrophosphoryl-MurNAc-pentapeptide (lipid intermediate I) to form undecaprenyl-pyrophosphoryl-MurNAc-(pentapeptide)GlcNAc (lipid intermediate II). The chain is UDP-N-acetylglucosamine--N-acetylmuramyl-(pentapeptide) pyrophosphoryl-undecaprenol N-acetylglucosamine transferase from Erwinia tasmaniensis (strain DSM 17950 / CFBP 7177 / CIP 109463 / NCPPB 4357 / Et1/99).